Consider the following 174-residue polypeptide: C-type lectin domain family 2 member A (174 aa).

The Cytoplasmic portion of the chain corresponds to 1-27 (MINPELRDGRADGFIHRIVPKLIQNWK). Residues 28–48 (IGLMCFLSIIITTVCIIMIAT) form a helical; Signal-anchor for type II membrane protein membrane-spanning segment. The Extracellular portion of the chain corresponds to 49-174 (WSKHAKPVAC…WICSKPKYFL (126 aa)). C58 and C69 are disulfide-bonded. In terms of domain architecture, C-type lectin spans 65–174 (VRDKCFYFSD…WICSKPKYFL (110 aa)). N78, N130, and N143 each carry an N-linked (GlcNAc...) asparagine glycan. A disulfide bond links C86 and C167.

As to quaternary structure, homodimer; non-disulfide-linked. Interacts with KLRB1. Interacts with KLRF2. Post-translationally, N-glycosylated. In terms of tissue distribution, mainly expressed in skin. Also expressed in keratinocytes, spleen, thymus, small intestine, peripheral blood monocytes, bone marrow, ovary, testis and skin. High expression in CD8(+), B-lymphocytes and naive CD4(+) T-cells. Restricted mostly to proliferating lymphocytes. Not detected in myeloid leukocytes or natural killer (NK) cells.

It localises to the cell membrane. In terms of biological role, membrane-bound protein expressed mainly on keratinocytes which acts as a ligand to stimulate the activating receptor NKp65/KLRF2, expressed on the surface of natural killer (NK) cells. Facilitates thereby dedicated immune recognition of keratinocytes leading to natural killer cell mediated cytotoxicity. Also plays a role in modulating the extent of T-cell expansion. This chain is C-type lectin domain family 2 member A (CLEC2A), found in Homo sapiens (Human).